Consider the following 162-residue polypeptide: MAVKIKLTRLGKIRNPQYRVAVADARTRRDGRAIEVIGRYHPKEEPSLIEINSERAQYWLSVGAQPTEPVLKLLKITGDWQKFKGLPGAQGRLKVAAPKPSKLEVFNAALAAADGGPTTEATKPKKKSPAKKAAKAAEPAPQPEQPDTPALGGEQAELTAES.

The segment at 113–162 is disordered; that stretch reads ADGGPTTEATKPKKKSPAKKAAKAAEPAPQPEQPDTPALGGEQAELTAES. Over residues 124–134 the composition is skewed to basic residues; it reads PKKKSPAKKAA.

This sequence belongs to the bacterial ribosomal protein bS16 family.

The protein is Small ribosomal subunit protein bS16 of Mycobacterium tuberculosis (strain ATCC 25177 / H37Ra).